Here is a 149-residue protein sequence, read N- to C-terminus: Sec-independent protein translocase protein TatB (149 aa).

A helical transmembrane segment spans residues 1–21 (MFDIGFTELIVIGIVALVVVG). Residues 92-149 (VDMLDKSVRNEPQNAQTPPQTADAEPAQPDVRQQTLPLEEPDQNRAAGEPSSTSTRPA) form a disordered region. Polar residues predominate over residues 101 to 111 (NEPQNAQTPPQ).

This sequence belongs to the TatB family. The Tat system comprises two distinct complexes: a TatABC complex, containing multiple copies of TatA, TatB and TatC subunits, and a separate TatA complex, containing only TatA subunits. Substrates initially bind to the TatABC complex, which probably triggers association of the separate TatA complex to form the active translocon.

It is found in the cell inner membrane. In terms of biological role, part of the twin-arginine translocation (Tat) system that transports large folded proteins containing a characteristic twin-arginine motif in their signal peptide across membranes. Together with TatC, TatB is part of a receptor directly interacting with Tat signal peptides. TatB may form an oligomeric binding site that transiently accommodates folded Tat precursor proteins before their translocation. This chain is Sec-independent protein translocase protein TatB, found in Thiobacillus denitrificans (strain ATCC 25259 / T1).